The chain runs to 82 residues: UPF0248 protein Mevan_1298 (82 aa).

The protein belongs to the UPF0248 family.

This chain is UPF0248 protein Mevan_1298, found in Methanococcus vannielii (strain ATCC 35089 / DSM 1224 / JCM 13029 / OCM 148 / SB).